The sequence spans 649 residues: 70 kDa protein (649 aa).

Disordered regions lie at residues 28–80 (LRRG…DFSP), 257–286 (ALSLCTPPRPAKSTSPCNNSQLPKPTAASD), 311–359 (TATS…SKQQ), and 458–550 (QSAE…PSSL). Residues 268–279 (KSTSPCNNSQLP) are compositionally biased toward polar residues. The segment covering 330–349 (RLQRSLHLHSRSPHSSHFRP) has biased composition (basic residues). Over residues 504–515 (DVSNSETKNCPS) the composition is skewed to polar residues. 2 stretches are compositionally biased toward low complexity: residues 524–533 (PNHLHPLLPG) and 540–550 (PRQLSPSPSSL).

This sequence belongs to the tymoviridae protein p69 family.

This Solanum lycopersicum (Tomato) protein is 70 kDa protein.